The following is a 797-amino-acid chain: Short transient receptor potential channel 4-associated protein (797 aa).

Ala2 is modified (N-acetylalanine). The tract at residues 2-400 is interaction with TNFRSF1A; the sequence is AAAPVAAGSG…VLYVLCVLLM (399 aa).

Component of the DCX(TRPC4AP) E3 ubiquitin ligase complex, at least composed of CUL4A, DDB1, TRPC4AP/TRUSS and RBX1. Interacts with MYC. Constitutively associated with TNFRSF1A. Directly interacts with TRADD, TRAF2, CHUK, IKBKB and IKBKG. Interacts with TRPC1, TRPC4 and TRPC5. As to quaternary structure, (Microbial infection) Interacts with Hepatitis B virus (HBV) protein X; leading to prevent ubiquitination of TRPC4AP by SKP2. In terms of processing, phosphorylated by GSK3B; phosphorylation is required for ubiquitination. Post-translationally, ubiquitinated by a SCF (SKP1-CUL1-F-box protein) E3 ubiquitin-protein ligase containing SKP2, leading to its degradation. Phosphorylation by GSK3B is required for ubiquitination.

The protein resides in the cytoplasm. It is found in the perinuclear region. Its pathway is protein modification; protein ubiquitination. In terms of biological role, substrate-recognition component of a DCX (DDB1-CUL4-X-box) E3 ubiquitin-protein ligase complex required for cell cycle control. The DCX(TRPC4AP) complex specifically mediates the polyubiquitination and subsequent degradation of MYC as part of the DesCEND (destruction via C-end degrons) pathway. The DesCEND (destruction via C-end degrons) pathway recognizes a C-degron located at the extreme C terminus of target proteins, leading to their ubiquitination and degradation. The DCX(TRPC4AP) complex specifically recognizes proteins with an arginine at the minus 3 position (R-3 motif) at the C-terminus, such as MYC, leading to their ubiquitination and degradation. Also participates in the activation of NFKB1 in response to ligation of TNFRSF1A, possibly by linking TNFRSF1A to the IKK signalosome. Involved in JNK activation via its interaction with TRAF2. Also involved in elevation of endoplasmic reticulum Ca(2+) storage reduction in response to CHRM1. The protein is Short transient receptor potential channel 4-associated protein of Homo sapiens (Human).